Here is a 346-residue protein sequence, read N- to C-terminus: Ribosomal RNA small subunit methyltransferase H (346 aa).

S-adenosyl-L-methionine-binding positions include 46 to 48, D63, F90, D113, and Q120; that span reads GGY. The disordered stretch occupies residues 270–346; it reads GGSAGSRHMP…LPETNELARS (77 aa).

It belongs to the methyltransferase superfamily. RsmH family.

The protein localises to the cytoplasm. The enzyme catalyses cytidine(1402) in 16S rRNA + S-adenosyl-L-methionine = N(4)-methylcytidine(1402) in 16S rRNA + S-adenosyl-L-homocysteine + H(+). Functionally, specifically methylates the N4 position of cytidine in position 1402 (C1402) of 16S rRNA. The polypeptide is Ribosomal RNA small subunit methyltransferase H (Brucella abortus (strain S19)).